The chain runs to 704 residues: Elongation factor G (704 aa).

The tr-type G domain occupies 8–291; that stretch reads DKVRNIGIMA…TVVECLPSPV (284 aa). GTP contacts are provided by residues 17–24, 90–94, and 144–147; these read AHIDAGKT, DTPGH, and NKMD.

This sequence belongs to the TRAFAC class translation factor GTPase superfamily. Classic translation factor GTPase family. EF-G/EF-2 subfamily.

The protein localises to the cytoplasm. Its function is as follows. Catalyzes the GTP-dependent ribosomal translocation step during translation elongation. During this step, the ribosome changes from the pre-translocational (PRE) to the post-translocational (POST) state as the newly formed A-site-bound peptidyl-tRNA and P-site-bound deacylated tRNA move to the P and E sites, respectively. Catalyzes the coordinated movement of the two tRNA molecules, the mRNA and conformational changes in the ribosome. This chain is Elongation factor G, found in Prosthecochloris aestuarii (strain DSM 271 / SK 413).